We begin with the raw amino-acid sequence, 272 residues long: Type II secretion system protein C (272 aa).

The Cytoplasmic segment spans residues Met-1 to Arg-16. The chain crosses the membrane as a helical span at residues Ile-17 to Trp-35. The Periplasmic portion of the chain corresponds to Arg-36–Glu-272.

Belongs to the GSP C family.

Its subcellular location is the cell inner membrane. Its function is as follows. Involved in a type II secretion system (T2SS, formerly general secretion pathway, GSP) for the export of proteins. Required for the translocation of the multiple pectic enzymes. The chain is Type II secretion system protein C (outC) from Dickeya dadantii (strain 3937) (Erwinia chrysanthemi (strain 3937)).